The following is a 103-amino-acid chain: Phosphoribosyl-ATP pyrophosphatase (103 aa).

The interval 84–103 (LQSREGKLSKTSDRKEINDL) is disordered.

The protein belongs to the PRA-PH family.

The protein resides in the cytoplasm. It carries out the reaction 1-(5-phospho-beta-D-ribosyl)-ATP + H2O = 1-(5-phospho-beta-D-ribosyl)-5'-AMP + diphosphate + H(+). It participates in amino-acid biosynthesis; L-histidine biosynthesis; L-histidine from 5-phospho-alpha-D-ribose 1-diphosphate: step 2/9. In Listeria innocua serovar 6a (strain ATCC BAA-680 / CLIP 11262), this protein is Phosphoribosyl-ATP pyrophosphatase (hisE).